Consider the following 617-residue polypeptide: Vacuolar protein sorting-associated protein 33B (617 aa).

Belongs to the STXBP/unc-18/SEC1 family. As to quaternary structure, interacts with vipas39. In terms of tissue distribution, widely expressed from 4 hours post-fertilization (hpf) to 24 hpf. At 48 hpf, localized to brain, retina, ear, liver and proximal intestine. This expression pattern is more pronounced at 72 hpf and persists through 5 days post-fertilization (dpf). At 3 dpf and 4 dpf, expression in the liver is predominantly in developing biliary epithelial cells. No expression detected in kidney or spinal cord.

The protein localises to the late endosome membrane. It is found in the lysosome membrane. Functionally, may play a role in vesicle-mediated protein trafficking to lysosomal compartments and in membrane docking/fusion reactions of late endosomes/lysosomes. Required for proper trafficking and targeting of the collagen-modifying enzyme lysyl hydroxylase 3 (LH3) to intracellular collagen. Mediates phagolysosomal fusion in macrophages. Proposed to be involved in endosomal maturation implicating vipas39. In epithelial cells, the vps33b:vipas39 complex may play a role in the apical recycling pathway and in the maintenance of the apical-basolateral polarity. Plays a role in bile duct development. The chain is Vacuolar protein sorting-associated protein 33B from Danio rerio (Zebrafish).